The sequence spans 164 residues: Endoribonuclease YbeY (164 aa).

Zn(2+)-binding residues include His124, His128, and His134.

This sequence belongs to the endoribonuclease YbeY family. The cofactor is Zn(2+).

Its subcellular location is the cytoplasm. In terms of biological role, single strand-specific metallo-endoribonuclease involved in late-stage 70S ribosome quality control and in maturation of the 3' terminus of the 16S rRNA. The sequence is that of Endoribonuclease YbeY from Nitrosomonas europaea (strain ATCC 19718 / CIP 103999 / KCTC 2705 / NBRC 14298).